Consider the following 368-residue polypeptide: Cyclic di-GMP phosphodiesterase TM_0186 (368 aa).

In terms of domain architecture, Response regulatory spans Thr2–Leu114. At Asp49 the chain carries 4-aspartylphosphate. Residues Tyr148–Asp345 enclose the HD-GYP domain. Residues Glu169, His173, His205, Asp206, His234, His260, His261, and Asp289 each coordinate a divalent metal cation. Positions Arg341–Arg368 are disordered. Residues His350–Pro360 are compositionally biased toward polar residues.

It catalyses the reaction 3',3'-c-di-GMP + 2 H2O = 2 GMP + 2 H(+). With respect to regulation, can function in vivo with either divalent iron or manganese occupying di- and trimetal sites. Dimetal is necessary and sufficient to catalyze conversion of c-di-GMP to pGpG, but conversion of pGpG to GMP requires an occupied trimetal site. Its function is as follows. Phosphodiesterase (PDE) that catalyzes the hydrolysis of cyclic diguanylate (c-di-GMP) to GMP. Hydrolyzes c-di-GMP to GMP in a two-step reaction, via the linear intermediate 5'-phosphoguanylyl(3'-&gt;5')guanosine (pGpG). The protein is Cyclic di-GMP phosphodiesterase TM_0186 of Thermotoga maritima (strain ATCC 43589 / DSM 3109 / JCM 10099 / NBRC 100826 / MSB8).